A 105-amino-acid polypeptide reads, in one-letter code: Insulin (105 aa).

The N-terminal stretch at 1–22 (MAFWLQAASLLVLLALSPGVDA) is a signal peptide. 3 cysteine pairs are disulfide-bonded: cysteine 29–cysteine 91, cysteine 41–cysteine 104, and cysteine 90–cysteine 95. A propeptide spans 53–82 (DVDPLIGFLSPKSAKENEEYPFKDQTEMMV) (c peptide).

Belongs to the insulin family. Heterodimer of a B chain and an A chain linked by two disulfide bonds.

It is found in the secreted. In terms of biological role, insulin decreases blood glucose concentration. It increases cell permeability to monosaccharides, amino acids and fatty acids. It accelerates glycolysis, the pentose phosphate cycle, and glycogen synthesis in liver. This Oncorhynchus keta (Chum salmon) protein is Insulin (ins).